The primary structure comprises 837 residues: Vacuolar membrane protease (837 aa).

At 1–36 (MSEEEVHDTSSEASEVFTNQPNAFVRGVRSIFGYRK) the chain is on the cytoplasmic side. The chain crosses the membrane as a helical span at residues 37–57 (TSLTLFVILTIVVTAGLSFYD). The Vacuolar segment spans residues 58–355 (NSLELTIELP…FATPISALAR (298 aa)). Asn-143 carries N-linked (GlcNAc...) asparagine glycosylation. The Zn(2+) site is built by His-157 and Asp-169. The Proton acceptor role is filled by Glu-201. Zn(2+) contacts are provided by Glu-202, Glu-227, and His-299. A helical transmembrane segment spans residues 356-376 (VNLVLLVLFPVVSTPLLFVIV). Residues 377–384 (KYKKWKLR) lie on the Cytoplasmic side of the membrane. Residues 385-405 (VTNFLGVPLAMGLAVAVGQVG) form a helical membrane-spanning segment. Over 406-415 (NPMLVSSHPM) the chain is Vacuolar. Residues 416 to 436 (MVVATTTSIVVLVYYVVLNGV) form a helical membrane-spanning segment. Over 437–446 (DWVNTSSDQK) the chain is Cytoplasmic. Residues 447-467 (LVTMIEVSFVYWVVLVYVTWS) traverse the membrane as a helical segment. Residues 468–474 (GGDHTGE) lie on the Vacuolar side of the membrane. The helical transmembrane segment at 475–495 (FGVTVLFFVQASTSLLGLIGW) threads the bilayer. Topologically, residues 496-539 (TFTRVRGGDEPLLSGEEERYGTEDERDTEKPLVEHNYDWSLQYL) are cytoplasmic. A helical membrane pass occupies residues 540-560 (LIVPVSSLVVYNSGWLVLEGV). N-linked (GlcNAc...) asparagine glycosylation is present at Asn-561. The Vacuolar segment spans residues 561–572 (NKTVQESLASEH). Residues 573-593 (LIYWIVVVFSQFLVLPVVPFI) form a helical membrane-spanning segment. At 594 to 598 (TKFNR) the chain is on the cytoplasmic side. A helical membrane pass occupies residues 599-619 (YIVLGLSVVVVVGVLMSMAVH). Over 620 to 837 (PFNQGSPMKL…LVGVVKHVDV (218 aa)) the chain is Vacuolar. N-linked (GlcNAc...) asparagine glycosylation is present at Asn-689.

This sequence belongs to the peptidase M28 family. Zn(2+) is required as a cofactor.

The protein localises to the vacuole membrane. Its function is as follows. May be involved in vacuolar sorting and osmoregulation. The sequence is that of Vacuolar membrane protease from Candida albicans (strain SC5314 / ATCC MYA-2876) (Yeast).